We begin with the raw amino-acid sequence, 64 residues long: Large ribosomal subunit protein bL28 (64 aa).

The disordered stretch occupies residues 1–26 (MARRDQLTGKGPLSGNTRSHAMNHSK).

The protein belongs to the bacterial ribosomal protein bL28 family.

The protein is Large ribosomal subunit protein bL28 of Ureaplasma urealyticum serovar 10 (strain ATCC 33699 / Western).